The sequence spans 127 residues: Putative B3 domain-containing protein At4g12617 (127 aa).

The TF-B3 DNA-binding region spans 35 to 127; it reads IMMPKTLLEA…HTRLNFKHVA (93 aa).

The protein resides in the nucleus. The polypeptide is Putative B3 domain-containing protein At4g12617 (Arabidopsis thaliana (Mouse-ear cress)).